The primary structure comprises 125 residues: Oxytocin-neurophysin 1 (125 aa).

Positions 1–19 are cleaved as a signal peptide; it reads MAGPSLACCLLGLLALTSA. A disulfide bridge connects residues C20 and C25. Residue G28 is modified to Glycine amide. Intrachain disulfides connect C41/C85, C44/C58, C52/C75, C59/C65, C92/C104, C98/C116, and C105/C110.

This sequence belongs to the vasopressin/oxytocin family. As to quaternary structure, interacts with oxytocin receptor (Ki=1.5 nM). Interacts with vasopressin V1aR/AVPR1A (Ki=37 nM), V1bR/AVPR1B (Ki=222 nM), and V2R/AVPR2 receptors (Ki=823 nM).

In terms of biological role, neurophysin 1 specifically binds oxytocin. Its function is as follows. Oxytocin causes contraction of the smooth muscle of the uterus and of the mammary gland. Acts by binding to oxytocin receptor (OXTR). The protein is Oxytocin-neurophysin 1 (OXT) of Sus scrofa (Pig).